Reading from the N-terminus, the 732-residue chain is Myosin heavy chain kinase B (732 aa).

The Alpha-type protein kinase domain occupies 124 to 328 (DPYTTTAQWT…ICQYLNLQSI (205 aa)). An ATP-binding site is contributed by 298–303 (GIGNLG). The disordered stretch occupies residues 331 to 428 (KSEKSDCGTV…TNKERSKSKS (98 aa)). Residues 356–394 (NNNNNNNNNNNNNNNNNNSNNNNNNNSSISKSLVEISSG) are compositionally biased toward low complexity. A compositionally biased stretch (basic and acidic residues) spans 395-404 (SKERNDRDSP). A compositionally biased stretch (polar residues) spans 405–419 (SRQLFVSNDGNTLNT). WD repeat units follow at residues 458-486 (KGYHVTSHLCICDNLLFTGCSDNSIRVYD), 500-528 (GHEGPVESICYNDQYLFSGSSDHSIKVWD), 540-568 (GHDKPVHTVLLNDKYLFSGSSDKTIKVWD), 580-608 (SHARAVKTLCISGQYLFSGSNDKTIKVWD), 620-648 (GHTKWVTTICILGTNLYSGSYDKTIRVWN), 660-688 (GHDRWVEHMVICDKLLFTASDDNTIKIWD), and 700-730 (GHNATVQCLAVWEDKKCVISCSHDQSIRVWG).

The protein belongs to the protein kinase superfamily. Alpha-type protein kinase family. ALPK subfamily.

It carries out the reaction L-threonyl-[myosin heavy-chain] + ATP = O-phospho-L-threonyl-[myosin heavy-chain] + ADP + H(+). Its function is as follows. Catalyzes its autophosphorylation, which is needed for enzymatic activity and phosphorylates myosin II heavy chain at a threonine in the C-terminal tail region. This phosphorylation is critical in regulating the assembly and disassembly of myosin II filament. Participates in control of myosin localization. The chain is Myosin heavy chain kinase B (mhkB) from Dictyostelium discoideum (Social amoeba).